The following is a 285-amino-acid chain: Pantothenate synthetase (285 aa).

Residue 30-37 (MGNLHDGH) coordinates ATP. The active-site Proton donor is histidine 37. A (R)-pantoate-binding site is contributed by glutamine 61. A beta-alanine-binding site is contributed by glutamine 61. 149 to 152 (GEKD) is an ATP binding site. Glutamine 155 serves as a coordination point for (R)-pantoate. ATP contacts are provided by residues isoleucine 178 and 186 to 189 (FSSR).

The protein belongs to the pantothenate synthetase family. Homodimer.

It is found in the cytoplasm. The enzyme catalyses (R)-pantoate + beta-alanine + ATP = (R)-pantothenate + AMP + diphosphate + H(+). It functions in the pathway cofactor biosynthesis; (R)-pantothenate biosynthesis; (R)-pantothenate from (R)-pantoate and beta-alanine: step 1/1. In terms of biological role, catalyzes the condensation of pantoate with beta-alanine in an ATP-dependent reaction via a pantoyl-adenylate intermediate. This chain is Pantothenate synthetase, found in Buchnera aphidicola subsp. Schizaphis graminum (strain Sg).